The sequence spans 177 residues: Transcriptional regulator MET31 (177 aa).

Residues 95–117 form a C2H2-type zinc finger; sequence YSCAKCQLKFSRSSDLRRHEKVH.

As to quaternary structure, interacts with MET4 and MET28.

The protein localises to the cytoplasm. Its subcellular location is the nucleus. In terms of biological role, auxiliary transcriptional regulator of sulfur amino acid metabolism. Involved in the transcriptional activation of MET28. In Saccharomyces cerevisiae (strain ATCC 204508 / S288c) (Baker's yeast), this protein is Transcriptional regulator MET31 (MET31).